Consider the following 328-residue polypeptide: DNA-directed RNA polymerase subunit alpha (328 aa).

The alpha N-terminal domain (alpha-NTD) stretch occupies residues 1 to 232 (MHNSLAELIK…QHLAILVDLK (232 aa)). An alpha C-terminal domain (alpha-CTD) region spans residues 246-328 (FDPLLLHPVD…PPEGLKKLNQ (83 aa)).

It belongs to the RNA polymerase alpha chain family. Homodimer. The RNAP catalytic core consists of 2 alpha, 1 beta, 1 beta' and 1 omega subunit. When a sigma factor is associated with the core the holoenzyme is formed, which can initiate transcription.

It carries out the reaction RNA(n) + a ribonucleoside 5'-triphosphate = RNA(n+1) + diphosphate. In terms of biological role, DNA-dependent RNA polymerase catalyzes the transcription of DNA into RNA using the four ribonucleoside triphosphates as substrates. This is DNA-directed RNA polymerase subunit alpha from Methylococcus capsulatus (strain ATCC 33009 / NCIMB 11132 / Bath).